A 403-amino-acid chain; its full sequence is Renin (403 aa).

An N-terminal signal peptide occupies residues 1–22 (MARCRMPRWGLLLVLWGSCTFG). Positions 23–65 (LPADTGAFRRIFLKKMPSIRESLKERGVDVAGLGAEWNQFTKR) are cleaved as a propeptide — activation peptide. Residue N70 is glycosylated (N-linked (GlcNAc...) asparagine). In terms of domain architecture, Peptidase A1 spans 85-400 (YYGEIGIGTP…DRHNNRIGFA (316 aa)). The active site involves D103. The cysteines at positions 116 and 123 are disulfide-linked. N140 carries an N-linked (GlcNAc...) asparagine glycan. A disulfide bridge connects residues C279 and C283. Residue D288 is part of the active site. C322 and C359 are joined by a disulfide.

It belongs to the peptidase A1 family. As to quaternary structure, interacts with ATP6AP2.

The protein resides in the secreted. It is found in the membrane. The catalysed reaction is Cleavage of Leu-|-Xaa bond in angiotensinogen to generate angiotensin I.. Interaction with ATP6AP2 results in a 5-fold increased efficiency in angiotensinogen processing. In terms of biological role, renin is a highly specific endopeptidase, whose only known function is to generate angiotensin I from angiotensinogen in the plasma, initiating a cascade of reactions that produce an elevation of blood pressure and increased sodium retention by the kidney. The protein is Renin (REN) of Canis lupus familiaris (Dog).